The chain runs to 521 residues: GMP synthase [glutamine-hydrolyzing] (521 aa).

One can recognise a Glutamine amidotransferase type-1 domain in the interval 5–203; that stretch reads KILILDFGSQ…VHEICGCGND (199 aa). Cys82 functions as the Nucleophile in the catalytic mechanism. Catalysis depends on residues His177 and Glu179. A GMPS ATP-PPase domain is found at 204–396; sequence WNMPDYISEA…LGLPHDMVYR (193 aa). 231–237 contributes to the ATP binding site; it reads SGGVDSS.

In terms of assembly, homodimer.

It carries out the reaction XMP + L-glutamine + ATP + H2O = GMP + L-glutamate + AMP + diphosphate + 2 H(+). It participates in purine metabolism; GMP biosynthesis; GMP from XMP (L-Gln route): step 1/1. Functionally, catalyzes the synthesis of GMP from XMP. In Azoarcus sp. (strain BH72), this protein is GMP synthase [glutamine-hydrolyzing].